The following is a 405-amino-acid chain: Serpin I2 (405 aa).

Positions 1–18 are cleaved as a signal peptide; it reads MNKTILWSFLLFFSGSQT. Asparagine 306 is a glycosylation site (N-linked (GlcNAc...) asparagine).

This sequence belongs to the serpin family. Expressed in pancreas.

It is found in the secreted. The polypeptide is Serpin I2 (Serpini2) (Mus musculus (Mouse)).